The primary structure comprises 617 residues: Dopamine beta-hydroxylase (617 aa).

The Cytoplasmic segment spans residues methionine 1–arginine 16. A helical; Signal-anchor for type II membrane protein transmembrane segment spans residues glutamate 17 to leucine 37. Topologically, residues glutamine 38 to glycine 617 are intragranular. One can recognise a DOMON domain in the interval glycine 57–leucine 173. N-linked (GlcNAc...) asparagine glycosylation is present at asparagine 64. Intrachain disulfides connect cysteine 154/cysteine 596, cysteine 232/cysteine 283, cysteine 269/cysteine 295, cysteine 390/cysteine 503, cysteine 394/cysteine 565, and cysteine 466/cysteine 488. N-linked (GlcNAc...) (complex) asparagine glycosylation occurs at asparagine 184. Tyrosine 230 is a catalytic residue. Residues histidine 262 and histidine 263 each coordinate Cu(2+). Histidine 333 serves as a coordination point for Cu(2+). The N-linked (GlcNAc...) asparagine glycan is linked to asparagine 344. Histidine 412 is an active-site residue. Cu(2+) contacts are provided by histidine 412, histidine 414, and methionine 487. N-linked (GlcNAc...) asparagine glycosylation occurs at asparagine 566. Positions glutamate 590–glycine 617 are disordered.

It belongs to the copper type II ascorbate-dependent monooxygenase family. In terms of assembly, homotetramer; composed of two disulfide-linked dimers. Cu(2+) is required as a cofactor. N-glycosylated. In terms of processing, proteolytic cleavage after the membrane-anchor leads to the release of the soluble form.

It is found in the cytoplasmic vesicle. The protein localises to the secretory vesicle lumen. Its subcellular location is the secretory vesicle. The protein resides in the chromaffin granule lumen. It localises to the secreted. It is found in the secretory vesicle membrane. The protein localises to the chromaffin granule membrane. The enzyme catalyses dopamine + 2 L-ascorbate + O2 = (R)-noradrenaline + 2 monodehydro-L-ascorbate radical + H2O. The protein operates within catecholamine biosynthesis; (R)-noradrenaline biosynthesis; (R)-noradrenaline from dopamine: step 1/1. Catalyzes the hydroxylation of dopamine to noradrenaline (also known as norepinephrine), and is thus vital for regulation of these neurotransmitters. The chain is Dopamine beta-hydroxylase (DBH) from Homo sapiens (Human).